A 190-amino-acid polypeptide reads, in one-letter code: dCTP deaminase (190 aa).

113 to 118 (KSTYAR) contributes to the dCTP binding site. Residue Glu-139 is the Proton donor/acceptor of the active site. Residues Gln-158, Tyr-172, Lys-181, and Gln-182 each contribute to the dCTP site.

Belongs to the dCTP deaminase family. In terms of assembly, homotrimer.

It carries out the reaction dCTP + H2O + H(+) = dUTP + NH4(+). It functions in the pathway pyrimidine metabolism; dUMP biosynthesis; dUMP from dCTP (dUTP route): step 1/2. Its function is as follows. Catalyzes the deamination of dCTP to dUTP. The sequence is that of dCTP deaminase from Chlamydia trachomatis serovar A (strain ATCC VR-571B / DSM 19440 / HAR-13).